A 70-amino-acid chain; its full sequence is Protein SlyX homolog (70 aa).

The protein belongs to the SlyX family.

The chain is Protein SlyX homolog from Shewanella sediminis (strain HAW-EB3).